Consider the following 220-residue polypeptide: FMN-dependent NADH:quinone oxidoreductase (220 aa).

FMN is bound by residues Ser10, 17-19 (SAS), and 136-139 (SRGG). The disordered stretch occupies residues 200 to 220 (HSEAVTKAKELTERLTADNGR).

It belongs to the azoreductase type 1 family. As to quaternary structure, homodimer. Requires FMN as cofactor.

It catalyses the reaction 2 a quinone + NADH + H(+) = 2 a 1,4-benzosemiquinone + NAD(+). The enzyme catalyses N,N-dimethyl-1,4-phenylenediamine + anthranilate + 2 NAD(+) = 2-(4-dimethylaminophenyl)diazenylbenzoate + 2 NADH + 2 H(+). Quinone reductase that provides resistance to thiol-specific stress caused by electrophilic quinones. Functionally, also exhibits azoreductase activity. Catalyzes the reductive cleavage of the azo bond in aromatic azo compounds to the corresponding amines. In Streptomyces coelicolor (strain ATCC BAA-471 / A3(2) / M145), this protein is FMN-dependent NADH:quinone oxidoreductase.